The following is a 116-amino-acid chain: Nascent polypeptide-associated complex protein (116 aa).

Positions Pro6–Lys70 constitute an NAC-A/B domain.

It belongs to the NAC-alpha family. In terms of assembly, homodimer. Interacts with the ribosome. Binds ribosomal RNA.

Contacts the emerging nascent chain on the ribosome. In Sulfolobus acidocaldarius (strain ATCC 33909 / DSM 639 / JCM 8929 / NBRC 15157 / NCIMB 11770), this protein is Nascent polypeptide-associated complex protein.